The chain runs to 325 residues: Syntaxin-16 (325 aa).

Over 1–301 the chain is Cytoplasmic; it reads MATRRLTDAF…AEQYQKKNRK (301 aa). Position 41 is a phosphoserine (S41). Positions 230 to 292 constitute a t-SNARE coiled-coil homology domain; the sequence is TLMVEERERE…EDGLKQLHKA (63 aa). Residues 302 to 322 traverse the membrane as a helical; Anchor for type IV membrane protein segment; it reads MLVILILFVIIIVLIVVLVGV. Over 323 to 325 the chain is Vesicular; that stretch reads KSR.

Belongs to the syntaxin family. As to quaternary structure, interacts with GCC2. Interacts with BAIAP3; this interaction is increased in the presence of calcium. As to expression, ubiquitous.

It localises to the golgi apparatus membrane. The protein localises to the cytoplasm. Its function is as follows. SNARE involved in vesicular transport from the late endosomes to the trans-Golgi network. The sequence is that of Syntaxin-16 (STX16) from Homo sapiens (Human).